The chain runs to 178 residues: Fatty-acid and retinol-binding protein 1 (178 aa).

An N-terminal signal peptide occupies residues Met-1–Ala-16. Asn-44 and Asn-75 each carry an N-linked (GlcNAc...) asparagine glycan. 2 coiled-coil regions span residues Asp-67–Asn-89 and Lys-123–Ala-153. A glycan (N-linked (GlcNAc...) asparagine) is linked at Asn-157.

Belongs to the fatty-acid and retinol-binding protein (FARBP) family. Post-translationally, N-glycosylated.

The protein resides in the secreted. In terms of biological role, binds retinol and different fatty acids. The sequence is that of Fatty-acid and retinol-binding protein 1 from Acanthocheilonema viteae (Filarial nematode worm).